We begin with the raw amino-acid sequence, 71 residues long: Disintegrin applaggin (71 aa).

A Disintegrin domain is found at 1–71; sequence EAGEECDCGS…SAGCPRNPFH (71 aa). 6 disulfide bridges follow: Cys-6-Cys-21, Cys-8-Cys-16, Cys-15-Cys-38, Cys-29-Cys-35, Cys-34-Cys-58, and Cys-47-Cys-65. The Cell attachment site motif lies at 50–52; it reads RGD.

It belongs to the venom metalloproteinase (M12B) family. P-II subfamily. P-IIa sub-subfamily. In terms of assembly, monomer (disintegrin). As to expression, expressed by the venom gland.

Its subcellular location is the secreted. Its function is as follows. Inhibits fibrinogen interaction with platelets. Acts by binding to alpha-IIb/beta-3 (ITGA2B/ITGB3) on the platelet surface and inhibits aggregation induced by ADP, thrombin, platelet-activating factor and collagen. The protein is Disintegrin applaggin of Agkistrodon piscivorus piscivorus (Eastern cottonmouth).